The chain runs to 1338 residues: Vascular endothelial growth factor receptor 1 (1338 aa).

The N-terminal stretch at 1–26 (MVSYWDTGVLLCALLSCLLLTGSSSG) is a signal peptide. Residues 27-758 (SKLKDPELSL…QGTSDKSNLE (732 aa)) lie on the Extracellular side of the membrane. Ig-like C2-type domains are found at residues 32–123 (PELS…TESA), 151–214 (GREL…VNGH), 230–327 (IDVQ…TSVH), 335–421 (TVKH…LTAT), 428–553 (PQIY…FYIT), 556–654 (PNGF…KEIT), and 661–747 (PYLL…AYLT). 2 disulfide bridges follow: cysteine 53-cysteine 107 and cysteine 158-cysteine 207. N-linked (GlcNAc...) asparagine glycosylation is found at asparagine 100, asparagine 164, asparagine 196, and asparagine 251. The cysteines at positions 252 and 311 are disulfide-linked. N-linked (GlcNAc...) asparagine glycosylation is found at asparagine 323, asparagine 402, asparagine 417, asparagine 474, asparagine 547, asparagine 597, asparagine 620, asparagine 625, and asparagine 666. An intrachain disulfide couples cysteine 454 to cysteine 535. Residues cysteine 577 and cysteine 636 are joined by a disulfide bond. Residues cysteine 682 and cysteine 731 are joined by a disulfide bond. The helical transmembrane segment at 759–780 (LITLTCTCVAATLFWLLLTLFI) threads the bilayer. Residues 781–1338 (RKMKRSSSEI…SVVLYSTPPI (558 aa)) lie on the Cytoplasmic side of the membrane. Residues 827–1158 (LKLGKSLGRG…ELVEKLGDLL (332 aa)) enclose the Protein kinase domain. ATP contacts are provided by residues 833 to 841 (LGRGAFGKV) and lysine 861. Tyrosine 914 is modified (phosphotyrosine; by autocatalysis). Basic and acidic residues predominate over residues 940 to 957 (PKKEKMEPGLEQGKKPRL). The disordered stretch occupies residues 940-982 (PKKEKMEPGLEQGKKPRLDSVTSSESFASSGFQEDKSLSDVEE). The segment covering 959 to 971 (SVTSSESFASSGF) has biased composition (polar residues). The Proton acceptor role is filled by aspartate 1022. Phosphotyrosine; by autocatalysis is present on residues tyrosine 1053, tyrosine 1169, tyrosine 1213, tyrosine 1242, tyrosine 1309, tyrosine 1327, and tyrosine 1333.

This sequence belongs to the protein kinase superfamily. Tyr protein kinase family. CSF-1/PDGF receptor subfamily. In terms of assembly, interacts with VEGFA, VEGFB and PGF. Monomer in the absence of bound VEGFA, VEGFB or PGF. Homodimer in the presence of bound VEGFA, VEGFB and PGF. Can also form a heterodimer with KDR. Interacts (when tyrosine phosphorylated) with CBL, CRK, GRB2, NCK1, PIK3R1, PLCG, PSEN1 and PTPN11. Probably also interacts with PTPRB. Interacts with RACK1. Identified in a complex with CBL and CD2AP. N-glycosylated. Post-translationally, ubiquitinated after VEGFA-mediated autophosphorylation, leading to proteolytic degradation. In terms of processing, autophosphorylated on tyrosine residues upon ligand binding. Autophosphorylation occurs in trans, i.e. one subunit of the dimeric receptor phosphorylates tyrosine residues on the other subunit. Phosphorylation at Tyr-1169 is important for interaction with PLCG. Phosphorylation at Tyr-1213 is important for interaction with PIK3R1, PTPN11, GRB2, and PLCG. Phosphorylation at Tyr-1333 is important for endocytosis and for interaction with CBL, NCK1 and CRK. Is probably dephosphorylated by PTPRB. In terms of tissue distribution, detected in normal lung, but also in placenta, liver, kidney, heart and brain tissues. Specifically expressed in most of the vascular endothelial cells, and also expressed in peripheral blood monocytes. Isoform 2 is strongly expressed in placenta. Isoform 3 is expressed in corneal epithelial cells (at protein level). Isoform 3 is expressed in vascular smooth muscle cells (VSMC).

It is found in the cell membrane. The protein resides in the endosome. It localises to the secreted. Its subcellular location is the cytoplasm. The enzyme catalyses L-tyrosyl-[protein] + ATP = O-phospho-L-tyrosyl-[protein] + ADP + H(+). Its activity is regulated as follows. Present in an inactive conformation in the absence of bound ligand. Binding of VEGFA, VEGFB or PGF leads to dimerization and activation by autophosphorylation on tyrosine residues. Functionally, tyrosine-protein kinase that acts as a cell-surface receptor for VEGFA, VEGFB and PGF, and plays an essential role in the development of embryonic vasculature, the regulation of angiogenesis, cell survival, cell migration, macrophage function, chemotaxis, and cancer cell invasion. Acts as a positive regulator of postnatal retinal hyaloid vessel regression. May play an essential role as a negative regulator of embryonic angiogenesis by inhibiting excessive proliferation of endothelial cells. Can promote endothelial cell proliferation, survival and angiogenesis in adulthood. Its function in promoting cell proliferation seems to be cell-type specific. Promotes PGF-mediated proliferation of endothelial cells, proliferation of some types of cancer cells, but does not promote proliferation of normal fibroblasts (in vitro). Has very high affinity for VEGFA and relatively low protein kinase activity; may function as a negative regulator of VEGFA signaling by limiting the amount of free VEGFA and preventing its binding to KDR. Modulates KDR signaling by forming heterodimers with KDR. Ligand binding leads to the activation of several signaling cascades. Activation of PLCG leads to the production of the cellular signaling molecules diacylglycerol and inositol 1,4,5-trisphosphate and the activation of protein kinase C. Mediates phosphorylation of PIK3R1, the regulatory subunit of phosphatidylinositol 3-kinase, leading to activation of phosphatidylinositol kinase and the downstream signaling pathway. Mediates activation of MAPK1/ERK2, MAPK3/ERK1 and the MAP kinase signaling pathway, as well as of the AKT1 signaling pathway. Phosphorylates SRC and YES1, and may also phosphorylate CBL. Promotes phosphorylation of AKT1 at 'Ser-473'. Promotes phosphorylation of PTK2/FAK1. Its function is as follows. Phosphorylates PLCG. In terms of biological role, may function as decoy receptor for VEGFA. Has a truncated kinase domain; it increases phosphorylation of SRC at 'Tyr-418' by unknown means and promotes tumor cell invasion. The sequence is that of Vascular endothelial growth factor receptor 1 (FLT1) from Homo sapiens (Human).